The chain runs to 234 residues: UPF0309 protein lmo0025 (234 aa).

Residues Val31–Pro205 enclose the SIS domain.

This sequence belongs to the UPF0309 family.

This Listeria monocytogenes serovar 1/2a (strain ATCC BAA-679 / EGD-e) protein is UPF0309 protein lmo0025.